Reading from the N-terminus, the 429-residue chain is Alpha-L-rhamnosidase rgxB (429 aa).

An N-terminal signal peptide occupies residues 1 to 20 (MAPIALKILLFTSLIVPSIS). 7 N-linked (GlcNAc...) asparagine glycosylation sites follow: Asn67, Asn77, Asn97, Asn103, Asn112, Asn135, and Asn219. A PbH1 1 repeat occupies 217 to 238 (SKNITLTNWEVVNGDDSISTKA). The active-site Proton donor is Asp231. Asn239, Asn247, Asn278, and Asn344 each carry an N-linked (GlcNAc...) asparagine glycan. 2 PbH1 repeats span residues 240 to 260 (STDI…AIGS) and 271 to 292 (VERL…YFKT). Cysteines 374 and 380 form a disulfide. 3 N-linked (GlcNAc...) asparagine glycosylation sites follow: Asn387, Asn395, and Asn414.

The protein belongs to the glycosyl hydrolase 28 family.

It is found in the secreted. It carries out the reaction Hydrolysis of terminal non-reducing alpha-L-rhamnose residues in alpha-L-rhamnosides.. In terms of biological role, alpha-L-rhamnosidase which is able to degrade p-nitrophenyl-alpha-L-rhamnopyranoside (pnp_Rha). The natural substrate of this enzyme has not been identified yet. This is Alpha-L-rhamnosidase rgxB (rgxB) from Aspergillus niger (strain ATCC MYA-4892 / CBS 513.88 / FGSC A1513).